We begin with the raw amino-acid sequence, 740 residues long: Autotransporter adhesin BtaE (740 aa).

Residues 1-11 form the signal peptide; the sequence is MFGLSVNHAYA. The interval 12-647 is surface exposed passenger domain; sequence GPGIFINDGT…LQTLDQANAY (636 aa). The outer membrane translocation of the passenger domain stretch occupies residues 648 to 686; it reads TDKKFGKLNEDIVATRIEARQAAAIGLAAASLRYDDRPG. Beta stranded transmembrane passes span 686-696, 700-710, 719-725, and 728-739; these read GKISAAIGGGF, EGAVALGLGHT, NLSAATS, and NWGMGAGFSYTF. Positions 687–740 are translocator domain; that stretch reads KISAAIGGGFWRGEGAVALGLGHTSEDQRMRSNLSAATSGGNWGMGAGFSYTFN.

The protein belongs to the autotransporter-2 (AT-2) (TC 1.B.40) family. As to quaternary structure, homotrimer.

The protein resides in the cell surface. The protein localises to the cell outer membrane. Its function is as follows. Binds to hyaluronic acid and epithelial cells, and is required for full virulence in the mouse model. The chain is Autotransporter adhesin BtaE from Brucella suis biovar 1 (strain 1330).